The chain runs to 362 residues: Peptide chain release factor 1 (362 aa).

Glutamine 237 is modified (N5-methylglutamine).

The protein belongs to the prokaryotic/mitochondrial release factor family. Methylated by PrmC. Methylation increases the termination efficiency of RF1.

The protein resides in the cytoplasm. Peptide chain release factor 1 directs the termination of translation in response to the peptide chain termination codons UAG and UAA. This Vibrio atlanticus (strain LGP32) (Vibrio splendidus (strain Mel32)) protein is Peptide chain release factor 1.